The chain runs to 429 residues: Keratin, type I cytoskeletal 47 kDa (429 aa).

The span at 1 to 16 (MTSYRSSSASYYSGSS) shows a compositional bias: low complexity. The disordered stretch occupies residues 1–20 (MTSYRSSSASYYSGSSSKGG). The interval 1–69 (MTSYRSSSAS…EAASSSFGGN (69 aa)) is head. The interval 70-105 (EKHAMQNLNDRLASYLEKVRALEATNSDLEGKIRNW) is coil 1A. Residues 70-385 (EKHAMQNLND…RLLEGELGQV (316 aa)) form the IF rod domain. The segment at 106-127 (YDKQSDAGIGAGSKDYSKYFEI) is linker 1. The coil 1B stretch occupies residues 128 to 219 (IAELRNKIRA…KNHEEEMSHA (92 aa)). Residues 220-242 (KSQSAGKVSVEMDAALGVDLTSI) are linker 12. The tract at residues 243-381 (LNNMRADYEI…QTYRRLLEGE (139 aa)) is coil 2. Positions 382–429 (LGQVTTVANTSSVESKTESSSTSTTRTRMVKTIVEEVVDGKVVSSRVE) are tail. Residues 389-408 (ANTSSVESKTESSSTSTTRT) form a disordered region. The segment covering 391-408 (TSSVESKTESSSTSTTRT) has biased composition (low complexity).

Belongs to the intermediate filament family. In terms of assembly, heterotetramer of two type I and two type II keratins.

The protein is Keratin, type I cytoskeletal 47 kDa (xk81a1) of Xenopus laevis (African clawed frog).